Consider the following 288-residue polypeptide: uncharacterized protein (288 aa).

The protein to M.bovis Mb1522c, M.leprae ML1804 and M.avium MAV321.

This is an uncharacterized protein from Mycobacterium tuberculosis (strain CDC 1551 / Oshkosh).